A 265-amino-acid polypeptide reads, in one-letter code: Mlc titration factor A (265 aa).

Zn(2+)-binding residues include H111, H148, H152, and E211.

Belongs to the MtfA family. In terms of assembly, interacts with Mlc. It depends on Zn(2+) as a cofactor.

The protein localises to the cytoplasm. Functionally, involved in the modulation of the activity of the glucose-phosphotransferase system (glucose-PTS). Interacts with the transcriptional repressor Mlc, preventing its interaction with DNA and leading to the modulation of expression of genes regulated by Mlc, including ptsG, which encodes the PTS system glucose-specific EIICB component. Its function is as follows. Shows zinc-dependent metallopeptidase activity. This chain is Mlc titration factor A, found in Shigella sonnei (strain Ss046).